The chain runs to 334 residues: Glucokinase-like protein PD_0680 (334 aa).

Ala18–Thr23 is a binding site for ATP.

It belongs to the bacterial glucokinase family.

This chain is Glucokinase-like protein PD_0680, found in Xylella fastidiosa (strain Temecula1 / ATCC 700964).